The primary structure comprises 583 residues: Nuclear hormone receptor family member nhr-31 (583 aa).

The segment at 43-77 (DLRTSGATSSSGPATSYIIRPSDKQPTVSSGGSQN) is disordered. Over residues 46-58 (TSGATSSSGPATS) the composition is skewed to low complexity. Over residues 66–77 (KQPTVSSGGSQN) the composition is skewed to polar residues. The nuclear receptor DNA-binding region spans 79–154 (DSVCAVCGDG…AGMDPKAVRP (76 aa)). NR C4-type zinc fingers lie at residues 82 to 102 (CAVC…CYGC) and 118 to 142 (CRFS…FQRC). Residues 195 to 464 (ETRILLMQLM…DNLLAEMFGD (270 aa)) enclose the NR LBD domain.

It belongs to the nuclear hormone receptor family.

The protein localises to the nucleus. Its function is as follows. Orphan nuclear receptor. This is Nuclear hormone receptor family member nhr-31 (nhr-31) from Caenorhabditis elegans.